A 376-amino-acid chain; its full sequence is Putative F-box protein At2g33200 (376 aa).

The 48-residue stretch at 6–53 folds into the F-box domain; sequence YDWSKLCHDILRLILESLHYKDYHRARTVCSNWYTASTTCKRPLYPWR.

This chain is Putative F-box protein At2g33200, found in Arabidopsis thaliana (Mouse-ear cress).